Consider the following 124-residue polypeptide: UPF0344 protein BH2983 (124 aa).

The next 4 helical transmembrane spans lie at 15–35, 40–60, 61–81, and 102–122; these read GSWAILIILFLVSYFLIKAGK, KILHMIVRLFFVIMLITGAGM, LVYWQFAFLFIVKGVLAIVLI, and IYWIVFITCLVLVALIGYNVI.

The protein belongs to the UPF0344 family.

It is found in the cell membrane. The protein is UPF0344 protein BH2983 of Halalkalibacterium halodurans (strain ATCC BAA-125 / DSM 18197 / FERM 7344 / JCM 9153 / C-125) (Bacillus halodurans).